We begin with the raw amino-acid sequence, 78 residues long: Translation initiation factor IF-1, chloroplastic (78 aa).

An S1-like domain is found at 1–72 (MKKQNLIDME…TKGRITYRLR (72 aa)).

It belongs to the IF-1 family. In terms of assembly, component of the 30S ribosomal translation pre-initiation complex which assembles on the 30S ribosome in the order IF-2 and IF-3, IF-1 and N-formylmethionyl-tRNA(fMet); mRNA recruitment can occur at any time during PIC assembly.

The protein localises to the plastid. It localises to the chloroplast. Its function is as follows. One of the essential components for the initiation of protein synthesis. Stabilizes the binding of IF-2 and IF-3 on the 30S subunit to which N-formylmethionyl-tRNA(fMet) subsequently binds. Helps modulate mRNA selection, yielding the 30S pre-initiation complex (PIC). Upon addition of the 50S ribosomal subunit IF-1, IF-2 and IF-3 are released leaving the mature 70S translation initiation complex. This chain is Translation initiation factor IF-1, chloroplastic, found in Physcomitrium patens (Spreading-leaved earth moss).